Consider the following 181-residue polypeptide: Crustacyanin-A1 subunit (181 aa).

3 disulfides stabilise this stretch: Cys-12–Cys-121, Cys-51–Cys-173, and Cys-117–Cys-150.

It belongs to the calycin superfamily. Lipocalin family. As to quaternary structure, oligomer; Can form dimers (beta-crustacyanin); or complexes of 16 subunits (alpha-crustacyanin). There are five types of subunits: A1, A2, A3, C1 and C2. In terms of tissue distribution, found in the carapace.

The protein resides in the secreted. It localises to the extracellular space. Functionally, binds the carotenoid astaxanthin (AXT) which provides the blue coloration to the carapace of the lobster. The chain is Crustacyanin-A1 subunit from Homarus gammarus (European lobster).